The primary structure comprises 499 residues: Cobyric acid synthase (499 aa).

The region spanning 266-449 (RLEIAVVRLP…LHGLFDNHLW (184 aa)) is the GATase cobBQ-type domain. The active-site Nucleophile is the Cys344. Residue His441 is part of the active site.

This sequence belongs to the CobB/CobQ family. CobQ subfamily.

It functions in the pathway cofactor biosynthesis; adenosylcobalamin biosynthesis. Catalyzes amidations at positions B, D, E, and G on adenosylcobyrinic A,C-diamide. NH(2) groups are provided by glutamine, and one molecule of ATP is hydrogenolyzed for each amidation. The polypeptide is Cobyric acid synthase (Synechococcus sp. (strain JA-2-3B'a(2-13)) (Cyanobacteria bacterium Yellowstone B-Prime)).